Reading from the N-terminus, the 710-residue chain is uncharacterized protein (710 aa).

Positions 1 to 40 (MSESDGAFKSPSLPPSHHAPAPMSPEKIRAPAEQMDGPVE) are disordered. The segment covering 15–25 (PSHHAPAPMSP) has biased composition (low complexity). The FHA domain maps to 108–165 (VVIGRIKPGCDLLMEHPSISRYHCILQYGNDKMSKTGKGWHIFELGSTHGSRMNKKRL). 3 coiled-coil regions span residues 206–240 (TEMK…KEEE), 409–440 (ETDT…LSAG), and 471–502 (AKTK…KIAK). Residues 230–250 (IDDEKREKEEEGCGWGMDYGE) are disordered. Disordered stretches follow at residues 535–560 (EIDQ…APTS), 591–619 (KNSL…AFGS), and 671–710 (EDYG…AGRY). Over residues 538 to 560 (QTPSQGPGPSTSATLPATVAPTS) the composition is skewed to polar residues. Residues 613 to 661 (QKEAFGSKVQKRVAQWEEELEAEKEELAKKQKLEAEEEAKKKVQRVRRR) adopt a coiled-coil conformation.

This is an uncharacterized protein from Caenorhabditis elegans.